The primary structure comprises 296 residues: Small ribosomal subunit protein uS2 (296 aa).

Residues 274–284 (ASSAAPADTWA) show a composition bias toward low complexity. The disordered stretch occupies residues 274–296 (ASSAAPADTWAGESGNPDAGVKW).

Belongs to the universal ribosomal protein uS2 family. As to quaternary structure, component of the small ribosomal subunit. Mature ribosomes consist of a small (40S) and a large (60S) subunit. The 40S subunit contains about 33 different proteins and 1 molecule of RNA (18S). The 60S subunit contains about 49 different proteins and 3 molecules of RNA (25S, 5.8S and 5S). Interacts with RPS21.

Its subcellular location is the cytoplasm. In terms of biological role, required for the assembly and/or stability of the 40S ribosomal subunit. Required for the processing of the 20S rRNA-precursor to mature 18S rRNA in a late step of the maturation of 40S ribosomal subunits. The polypeptide is Small ribosomal subunit protein uS2 (Ajellomyces capsulatus (strain G186AR / H82 / ATCC MYA-2454 / RMSCC 2432) (Darling's disease fungus)).